We begin with the raw amino-acid sequence, 173 residues long: Lens fiber membrane intrinsic protein (173 aa).

Residues 1–3 (MYS) lie on the Cytoplasmic side of the membrane. A helical membrane pass occupies residues 4 to 24 (FMGGGLFCAWVGTILLVVATA). Over 25-66 (TDHWMQYRLSGSFAHQGLWRYCLGNKCFLQTESIAYWNATRA) the chain is Extracellular. C-linked (Man) tryptophan glycosylation is found at Trp-43 and Trp-61. N-linked (GlcNAc...) asparagine glycosylation is present at Asn-62. Residues 67–87 (FMILSALCATSGIIMGVLAFA) traverse the membrane as a helical segment. Residues 88 to 98 (QQSTFTRLSRP) lie on the Cytoplasmic side of the membrane. Residues 99 to 119 (FSAGIMFFASTLFVLLALAIY) traverse the membrane as a helical segment. The Extracellular segment spans residues 120 to 140 (TGVTVSFLGRRFGDWRFSWSY). The chain crosses the membrane as a helical span at residues 141–161 (ILGWVALLMTFFAGIFYMCAY). Residues 162-173 (RMHECRRLSTPR) lie on the Cytoplasmic side of the membrane. Phosphoserine is present on Ser-170. At Thr-171 the chain carries Phosphothreonine.

It belongs to the PMP-22/EMP/MP20 family. In terms of assembly, seems to be associated with itself or another lens membrane component via disulfide bonds. As to expression, eye lens specific.

It is found in the membrane. Its function is as follows. Present in the thicker 16-17 nm junctions of mammalian lens fiber cells, where it may contribute to cell junctional organization. Acts as a receptor for calmodulin. May play an important role in both lens development and cataractogenesis. This is Lens fiber membrane intrinsic protein (Lim2) from Rattus norvegicus (Rat).